A 136-amino-acid polypeptide reads, in one-letter code: Large ribosomal subunit protein eL27 (136 aa).

The KOW domain occupies 5-40; sequence MKPGKVVLVLAGRYSGRKAVIVKNIDDGTSDRPYSH. 2 positions are modified to N6-acetyllysine: Lys27 and Lys93.

Belongs to the eukaryotic ribosomal protein eL27 family. Component of the large ribosomal subunit. Interacts with RRP1B. Component of the large ribosomal subunit. Interacts with RRP1B. Interacts with DHX33.

Its subcellular location is the cytoplasm. It localises to the cytosol. The protein resides in the rough endoplasmic reticulum. In terms of biological role, component of the large ribosomal subunit. Required for proper rRNA processing and maturation of 28S and 5.8S rRNAs. This chain is Large ribosomal subunit protein eL27 (RPL27), found in Canis lupus familiaris (Dog).